Reading from the N-terminus, the 196-residue chain is Holliday junction branch migration complex subunit RuvA (196 aa).

The segment at 1 to 63 is domain I; sequence MINKIHGKVI…ENELKLFGFL (63 aa). The domain II stretch occupies residues 64 to 139; the sequence is NSDERETFKS…KLLINNELES (76 aa). Position 139 (serine 139) is a region of interest, flexible linker. Residues 139 to 196 are domain III; sequence SSLFGFKELEESIVSMGFDRKIVNSKLKEACDLIEFSNLKDSEKEQFLFKEVLKRMSN.

It belongs to the RuvA family. In terms of assembly, homotetramer. Forms an RuvA(8)-RuvB(12)-Holliday junction (HJ) complex. HJ DNA is sandwiched between 2 RuvA tetramers; dsDNA enters through RuvA and exits via RuvB. An RuvB hexamer assembles on each DNA strand where it exits the tetramer. Each RuvB hexamer is contacted by two RuvA subunits (via domain III) on 2 adjacent RuvB subunits; this complex drives branch migration. In the full resolvosome a probable DNA-RuvA(4)-RuvB(12)-RuvC(2) complex forms which resolves the HJ.

The protein localises to the cytoplasm. Its function is as follows. The RuvA-RuvB-RuvC complex processes Holliday junction (HJ) DNA during genetic recombination and DNA repair, while the RuvA-RuvB complex plays an important role in the rescue of blocked DNA replication forks via replication fork reversal (RFR). RuvA specifically binds to HJ cruciform DNA, conferring on it an open structure. The RuvB hexamer acts as an ATP-dependent pump, pulling dsDNA into and through the RuvAB complex. HJ branch migration allows RuvC to scan DNA until it finds its consensus sequence, where it cleaves and resolves the cruciform DNA. This Borrelia garinii subsp. bavariensis (strain ATCC BAA-2496 / DSM 23469 / PBi) (Borreliella bavariensis) protein is Holliday junction branch migration complex subunit RuvA.